The sequence spans 293 residues: Phosphatidylglycerol--prolipoprotein diacylglyceryl transferase (293 aa).

Transmembrane regions (helical) follow at residues 4-24, 45-65, 81-101, and 115-135; these read ILAF…LFIF, FELR…YFVA, ELIF…YVLF, and IWEG…TGFL. Arg165 serves as a coordination point for a 1,2-diacyl-sn-glycero-3-phospho-(1'-sn-glycerol). Helical transmembrane passes span 204 to 224, 231 to 249, and 262 to 282; these read PTFL…SVYF, HGEV…RIVI, and IKAA…GFLI.

This sequence belongs to the Lgt family.

It is found in the cell inner membrane. The enzyme catalyses L-cysteinyl-[prolipoprotein] + a 1,2-diacyl-sn-glycero-3-phospho-(1'-sn-glycerol) = an S-1,2-diacyl-sn-glyceryl-L-cysteinyl-[prolipoprotein] + sn-glycerol 1-phosphate + H(+). It participates in protein modification; lipoprotein biosynthesis (diacylglyceryl transfer). Functionally, catalyzes the transfer of the diacylglyceryl group from phosphatidylglycerol to the sulfhydryl group of the N-terminal cysteine of a prolipoprotein, the first step in the formation of mature lipoproteins. The protein is Phosphatidylglycerol--prolipoprotein diacylglyceryl transferase of Thermotoga petrophila (strain ATCC BAA-488 / DSM 13995 / JCM 10881 / RKU-1).